The following is a 181-amino-acid chain: Acireductone dioxygenase (181 aa).

Residues 1 to 10 show a composition bias toward acidic residues; sequence MRAYIYDEES. Residues 1–23 form a disordered region; that stretch reads MRAYIYDEESQLSPQDEHESSQS. Residues His82, His84, Glu88, and His128 each contribute to the Fe(2+) site. The Ni(2+) site is built by His82, His84, Glu88, and His128.

This sequence belongs to the acireductone dioxygenase (ARD) family. Fe(2+) is required as a cofactor. Ni(2+) serves as cofactor.

It localises to the cytoplasm. It is found in the nucleus. It carries out the reaction 1,2-dihydroxy-5-(methylsulfanyl)pent-1-en-3-one + O2 = 4-methylsulfanyl-2-oxobutanoate + formate + 2 H(+). The catalysed reaction is 1,2-dihydroxy-5-(methylsulfanyl)pent-1-en-3-one + O2 = 3-(methylsulfanyl)propanoate + CO + formate + 2 H(+). Its pathway is amino-acid biosynthesis; L-methionine biosynthesis via salvage pathway; L-methionine from S-methyl-5-thio-alpha-D-ribose 1-phosphate: step 5/6. Its function is as follows. Catalyzes 2 different reactions between oxygen and the acireductone 1,2-dihydroxy-3-keto-5-methylthiopentene (DHK-MTPene) depending upon the metal bound in the active site. Fe-containing acireductone dioxygenase (Fe-ARD) produces formate and 2-keto-4-methylthiobutyrate (KMTB), the alpha-ketoacid precursor of methionine in the methionine recycle pathway. Ni-containing acireductone dioxygenase (Ni-ARD) produces methylthiopropionate, carbon monoxide and formate, and does not lie on the methionine recycle pathway. This Puccinia graminis f. sp. tritici (strain CRL 75-36-700-3 / race SCCL) (Black stem rust fungus) protein is Acireductone dioxygenase.